We begin with the raw amino-acid sequence, 254 residues long: Proteasome activator complex subunit 3 (254 aa).

Position 2 is an N-acetylalanine (Ala2). Phosphoserine occurs at positions 17 and 24. At Lys195 the chain carries N6-acetyllysine; by P300/CBP. Position 247 is a phosphoserine; by CHEK2 (Ser247).

It belongs to the PA28 family. As to quaternary structure, homoheptamer; the stability of the heptamer is essential for the specific activation of the trypsine-like subunit and inhibition of the chymotrypsin-like and postglutamyl-preferring (PGPH) subunits of the proteasome. Interacts with p53/TP53 and MDM2. Interacts with MAP3K3. Associates with the proteasome. Interacts with CCAR2. Interacts with PSME3IP1 (via C-terminus); the interaction is direct and promotes the association of PSME3 with the 20S proteasome. Interacts with COIL; the interaction is inhibited by PSME3IP1. (Microbial infection) Interacts with human cytomegalovirus UL27. In terms of processing, phosphorylated by MAP3K3. Phosphorylation at Ser-247 promotes its association with CCAR2. Acetylation at the major site Lys-195 is important for oligomerization and ability to degrade its target substrates. Deacetylated by SIRT1.

The protein resides in the nucleus. The protein localises to the cytoplasm. In terms of biological role, subunit of the 11S REG-gamma (also called PA28-gamma) proteasome regulator, a doughnut-shaped homoheptamer which associates with the proteasome. 11S REG-gamma activates the trypsin-like catalytic subunit of the proteasome but inhibits the chymotrypsin-like and postglutamyl-preferring (PGPH) subunits. Facilitates the MDM2-p53/TP53 interaction which promotes ubiquitination- and MDM2-dependent proteasomal degradation of p53/TP53, limiting its accumulation and resulting in inhibited apoptosis after DNA damage. May also be involved in cell cycle regulation. Mediates CCAR2 and CHEK2-dependent SIRT1 inhibition. The sequence is that of Proteasome activator complex subunit 3 (PSME3) from Homo sapiens (Human).